The following is a 259-amino-acid chain: Adenosylcobinamide-GDP ribazoletransferase (259 aa).

Helical transmembrane passes span 43-63 (LAGA…LGLG), 64-84 (ASSM…TGAL), 116-136 (FGVL…ASLV), 141-161 (PINV…LMVW), and 185-205 (TLYT…APVT).

Belongs to the CobS family. Mg(2+) serves as cofactor.

It localises to the cell inner membrane. The catalysed reaction is alpha-ribazole + adenosylcob(III)inamide-GDP = adenosylcob(III)alamin + GMP + H(+). It catalyses the reaction alpha-ribazole 5'-phosphate + adenosylcob(III)inamide-GDP = adenosylcob(III)alamin 5'-phosphate + GMP + H(+). The protein operates within cofactor biosynthesis; adenosylcobalamin biosynthesis; adenosylcobalamin from cob(II)yrinate a,c-diamide: step 7/7. Functionally, joins adenosylcobinamide-GDP and alpha-ribazole to generate adenosylcobalamin (Ado-cobalamin). Also synthesizes adenosylcobalamin 5'-phosphate from adenosylcobinamide-GDP and alpha-ribazole 5'-phosphate. This Allorhizobium ampelinum (strain ATCC BAA-846 / DSM 112012 / S4) (Agrobacterium vitis (strain S4)) protein is Adenosylcobinamide-GDP ribazoletransferase.